Here is a 522-residue protein sequence, read N- to C-terminus: 2-isopropylmalate synthase (522 aa).

In terms of domain architecture, Pyruvate carboxyltransferase spans 5–267; that stretch reads VIIFDTTLRD…ETGINAKEIH (263 aa). Positions 14, 202, 204, and 238 each coordinate Mn(2+). Residues 392–522 are regulatory domain; the sequence is QLQQLVVQSD…MHKNRELGGV (131 aa).

It belongs to the alpha-IPM synthase/homocitrate synthase family. LeuA type 1 subfamily. As to quaternary structure, homodimer. Mn(2+) serves as cofactor.

The protein localises to the cytoplasm. The enzyme catalyses 3-methyl-2-oxobutanoate + acetyl-CoA + H2O = (2S)-2-isopropylmalate + CoA + H(+). The protein operates within amino-acid biosynthesis; L-leucine biosynthesis; L-leucine from 3-methyl-2-oxobutanoate: step 1/4. Catalyzes the condensation of the acetyl group of acetyl-CoA with 3-methyl-2-oxobutanoate (2-ketoisovalerate) to form 3-carboxy-3-hydroxy-4-methylpentanoate (2-isopropylmalate). The sequence is that of 2-isopropylmalate synthase from Shewanella sp. (strain ANA-3).